The sequence spans 633 residues: Chitin synthase regulatory factor 4 (633 aa).

The tract at residues 121–151 (ATSSQETKRDRPLPNIRNSAPSATRSHSTPC) is disordered. Positions 136 to 149 (IRNSAPSATRSHST) are enriched in polar residues. Ser-148 carries the phosphoserine modification. Sel1-like repeat units follow at residues 278-314 (AKAM…NLGY), 315-346 (TRSL…SEND), 438-474 (SSAQ…KRGE), 475-511 (TEAD…MAGN), and 512-543 (ANAQ…KAGH). The disordered stretch occupies residues 583–613 (ASETSPPHAPAVSSTPVTSAPPVSQTKVTKV). The segment covering 592 to 613 (PAVSSTPVTSAPPVSQTKVTKV) has biased composition (low complexity).

It localises to the cytoplasm. Functionally, involved in septum formation. Required for the proper localization of chs2 at the septum. This chain is Chitin synthase regulatory factor 4 (chr4), found in Schizosaccharomyces pombe (strain 972 / ATCC 24843) (Fission yeast).